The chain runs to 125 residues: Large ribosomal subunit protein bL12 (125 aa).

The protein belongs to the bacterial ribosomal protein bL12 family. As to quaternary structure, homodimer. Part of the ribosomal stalk of the 50S ribosomal subunit. Forms a multimeric L10(L12)X complex, where L10 forms an elongated spine to which 2 to 4 L12 dimers bind in a sequential fashion. Binds GTP-bound translation factors.

In terms of biological role, forms part of the ribosomal stalk which helps the ribosome interact with GTP-bound translation factors. Is thus essential for accurate translation. This chain is Large ribosomal subunit protein bL12, found in Bradyrhizobium sp. (strain BTAi1 / ATCC BAA-1182).